The chain runs to 167 residues: Signal peptidase complex subunit 3A (167 aa).

The Cytoplasmic portion of the chain corresponds to 1–11 (MHTFGYRANAL). The chain crosses the membrane as a helical; Signal-anchor for type II membrane protein span at residues 12–32 (LTFAVTALAFICAIASFSDKF). The Lumenal portion of the chain corresponds to 33 to 167 (SNQNPSAEIQ…PGYSLPDAYR (135 aa)). Asn-136 is a glycosylation site (N-linked (GlcNAc...) asparagine).

This sequence belongs to the SPCS3 family. Component of the signal peptidase complex (SPC) composed of a catalytic subunit SEC11 and three accessory subunits SPCS1, SPCS2 and SPCS3. The complex induces a local thinning of the ER membrane which is used to measure the length of the signal peptide (SP) h-region of protein substrates. This ensures the selectivity of the complex towards h-regions shorter than 18-20 amino acids.

It localises to the endoplasmic reticulum membrane. Essential component of the signal peptidase complex (SPC) which catalyzes the cleavage of N-terminal signal sequences from nascent proteins as they are translocated into the lumen of the endoplasmic reticulum. Essential for the SPC catalytic activity, possibly by stabilizing and positioning the active center of the complex close to the lumenal surface. This chain is Signal peptidase complex subunit 3A, found in Arabidopsis thaliana (Mouse-ear cress).